A 186-amino-acid chain; its full sequence is Ribosome-recycling factor (186 aa).

The protein belongs to the RRF family.

The protein resides in the cytoplasm. In terms of biological role, responsible for the release of ribosomes from messenger RNA at the termination of protein biosynthesis. May increase the efficiency of translation by recycling ribosomes from one round of translation to another. This Bordetella avium (strain 197N) protein is Ribosome-recycling factor.